Consider the following 200-residue polypeptide: Putative protein ATXN8OS (200 aa).

Positions Pro19–Glu39 are disordered. Acidic residues predominate over residues Glu25 to Glu39.

In terms of tissue distribution, expressed in brain. Expressed in muscle tissues (at protein level).

The protein localises to the cytoplasm. The polypeptide is Putative protein ATXN8OS (Homo sapiens (Human)).